A 332-amino-acid chain; its full sequence is MSSLTLSRRPRRNRKTAAIRDLLAETHLSPKDLIAPFFVKYGNNIKEEIPSLPGVFRWSLDLLLKEIERLCTYGLRAVMLFPIIPDDLKDAYGSYSSNPKNILCHSIHEIKNAFPHLCLISDIALDPYTTHGHDGIFLNGEVLNDESVRIFGNIATLHAEMGADIVAPSDMMDGRIGYIRSKLDQSGYSKTSIMSYSVKYASCLYSPFRDALSSHVTSGDKKQYQMNPKNVLEALLESSLDEEEGADILMVKPAGLYLDVIYRIRQNTCLPLAAYQVSGEYAMILSAFQQGWLDKETLFHESLIAIKRAGADMIISYSAPFILELLHQGFEF.

The active-site Schiff-base intermediate with substrate is the K199. R209 and K221 together coordinate 5-aminolevulinate. E237 contributes to the Mg(2+) binding site. Residue K252 is the Schiff-base intermediate with substrate of the active site. 5-aminolevulinate is bound by residues S278 and Y317.

Belongs to the ALAD family. In terms of assembly, homooctamer.

The catalysed reaction is 2 5-aminolevulinate = porphobilinogen + 2 H2O + H(+). Its pathway is porphyrin-containing compound metabolism; protoporphyrin-IX biosynthesis; coproporphyrinogen-III from 5-aminolevulinate: step 1/4. Its function is as follows. Catalyzes an early step in the biosynthesis of tetrapyrroles. Binds two molecules of 5-aminolevulinate per subunit, each at a distinct site, and catalyzes their condensation to form porphobilinogen. The polypeptide is Delta-aminolevulinic acid dehydratase (hemB) (Chlamydia pneumoniae (Chlamydophila pneumoniae)).